Consider the following 124-residue polypeptide: Small ribosomal subunit protein uS13 (124 aa).

Residues 99–124 form a disordered region; the sequence is RGQRTRTNARTRKGPRKTVGVMRKKS. Basic residues predominate over residues 101-124; the sequence is QRTRTNARTRKGPRKTVGVMRKKS.

This sequence belongs to the universal ribosomal protein uS13 family. As to quaternary structure, part of the 30S ribosomal subunit. Forms a loose heterodimer with protein S19. Forms two bridges to the 50S subunit in the 70S ribosome.

Its function is as follows. Located at the top of the head of the 30S subunit, it contacts several helices of the 16S rRNA. In the 70S ribosome it contacts the 23S rRNA (bridge B1a) and protein L5 of the 50S subunit (bridge B1b), connecting the 2 subunits; these bridges are implicated in subunit movement. Contacts the tRNAs in the A and P-sites. This Caldicellulosiruptor saccharolyticus (strain ATCC 43494 / DSM 8903 / Tp8T 6331) protein is Small ribosomal subunit protein uS13.